The chain runs to 497 residues: Serine/threonine-protein phosphatase 2A 56 kDa regulatory subunit beta isoform (497 aa).

The segment covering 1-19 (METKLPPASTPTSPSSPGL) has biased composition (low complexity). Disordered regions lie at residues 1 to 55 (METK…YQSN) and 475 to 497 (TQGAKEAPLQRLTPQVAASGGQS). Ser32, Ser35, Ser44, Ser46, Ser47, and Ser48 each carry phosphoserine; by CLK2. Basic residues predominate over residues 34–45 (RSLRRARPRRSH).

This sequence belongs to the phosphatase 2A regulatory subunit B56 family. Component of the serine/threonine-protein phosphatase 2A complex (PP2A). This complex consists of a common heterodimeric core enzyme, composed of a 36 kDa catalytic subunit (subunit C) and a 65 kDa constant scaffold subunit (PR65 or subunit A), that associates with a variety of regulatory subunits. Proteins that associate with the core dimer include three families of regulatory subunits B (the R2/B/PR55/B55, R3/B''/PR72/PR130/PR59 and R5/B'/B56 families), the 48 kDa variable regulatory subunit, viral proteins, and cell signaling molecules. Interacts with SGO1. Interacts with AKT1. Interacts with CUL3 and KLHL15; this interaction leads to proteasomal degradation. Post-translationally, ubiquitinated by E3 CUL3-KLHL15 complex; this modification leads to proteasomal degradation. Highest expression in brain.

Its subcellular location is the cytoplasm. In terms of biological role, as the regulatory component of the serine/threonine-protein phosphatase 2A (PP2A) holoenzyme, modulates substrate specificity, subcellular localization, and responsiveness to phosphorylation. The phosphorylated form mediates the interaction between PP2A and AKT1, leading to AKT1 dephosphorylation. The protein is Serine/threonine-protein phosphatase 2A 56 kDa regulatory subunit beta isoform (PPP2R5B) of Homo sapiens (Human).